Here is a 443-residue protein sequence, read N- to C-terminus: Serine/threonine-protein kinase Nek2 (443 aa).

Residues 8 to 271 (YEVLHSIGTG…VEEILESPLI (264 aa)) enclose the Protein kinase domain. Residues 14 to 22 (IGTGSYGRC) and Lys37 contribute to the ATP site. Asp141 serves as the catalytic Proton acceptor. Phosphothreonine; by autocatalysis is present on Thr170. Ser171 carries the post-translational modification Phosphoserine; by autocatalysis. Residues Thr175 and Thr179 each carry the phosphothreonine; by autocatalysis modification. Ser184 is subject to Phosphoserine. At Ser241 the chain carries Phosphoserine; by autocatalysis. Positions 264-443 (EILESPLIAD…LKSRQILGMR (180 aa)) are interaction with PCNT. Residues 282 to 292 (NLERRGRRSGE) show a composition bias toward basic and acidic residues. The disordered stretch occupies residues 282–303 (NLERRGRRSGEPSKLPDSSPVL). Phosphoserine is present on Ser300. The segment at 301 to 443 (PVLSELKLKE…LKSRQILGMR (143 aa)) is interaction with CEP85. Residues 303–361 (LSELKLKERQLQDREQALRAREDILEQKERELCIRERLAEDKLARAESLMKNYSLLKEH) adopt a coiled-coil conformation. The interval 306–334 (LKLKERQLQDREQALRAREDILEQKEREL) is leucine-zipper. The necessary for interaction with MAD1L1 stretch occupies residues 329-443 (QKERELCIRE…LKSRQILGMR (115 aa)). Residues 333 to 370 (ELCIRERLAEDKLARAESLMKNYSLLKEHRLLCLAGGP) are required for microtubule binding and for localization to the centrosomes. A Phosphoserine; by STK3/MST2 modification is found at Ser356. Residues 383 to 402 (VHFHGESKENTARSENSESY) are disordered. Basic and acidic residues predominate over residues 385-398 (FHGESKENTARSEN). Residues Ser389, Ser396, and Ser401 each carry the phosphoserine modification. Residues 402-437 (YLAKSKCRDLKKRLHAAQLRAQALADIEKNYQLKSR) are interaction with SAV1 and STK3/MST2. A coiled-coil region spans residues 403-427 (LAKSKCRDLKKRLHAAQLRAQALAD). Ser436 is modified (phosphoserine; by STK3/MST2).

Belongs to the protein kinase superfamily. NEK Ser/Thr protein kinase family. NIMA subfamily. As to quaternary structure, forms homodimers and heterodimers. Interacts with CDC20, CTNB1, MAD1L1, MAD2L1, MAPK, NEK11, NPM1, NDC80, PCNT, PPP1CA, PPP1CC and SGO1. Interacts with STK3/MST2 (via SARAH domain) and SAV1 (via SARAH domain). Interacts with NECAB3 and HMGA2. Interacts with CEP68; the interaction leads to phosphorylation of CEP68. Interacts with CNTLN; the interaction leads to phosphorylation of CNTLN. Interacts with CEP85. Mg(2+) is required as a cofactor. Activated by autophosphorylation. Protein phosphatase 1 represses autophosphorylation and activation of isoform 1 by dephosphorylation. Phosphorylation by STK3/MST2 is necessary for its localization to the centrosome. In terms of tissue distribution, most abundantly expressed in testis. Low levels found in mid-gestation embryo, ovary, placenta, intestine, thymus and skin. Within the testis, expression restricted to germ cells with highest levels detected in spermatocytes at pachytene and diplotene stages. Also expressed in meiotic pachytene oocytes.

Its subcellular location is the nucleus. The protein localises to the nucleolus. It is found in the cytoplasm. It localises to the cytoskeleton. The protein resides in the microtubule organizing center. Its subcellular location is the centrosome. The protein localises to the spindle pole. It is found in the chromosome. It localises to the centromere. The protein resides in the kinetochore. It catalyses the reaction L-seryl-[protein] + ATP = O-phospho-L-seryl-[protein] + ADP + H(+). It carries out the reaction L-threonyl-[protein] + ATP = O-phospho-L-threonyl-[protein] + ADP + H(+). Its activity is regulated as follows. Its catalytic activity is inhibited by the inhibitor CCT241950. In the presence of this inhibitor, displays an autoinhibited conformation: Tyr-70 side chain points into the active site, interacts with the activation loop, and blocks the alphaC helix. In terms of biological role, protein kinase which is involved in the control of centrosome separation and bipolar spindle formation in mitotic cells and chromatin condensation in meiotic cells. Regulates centrosome separation (essential for the formation of bipolar spindles and high-fidelity chromosome separation) by phosphorylating centrosomal proteins such as CROCC, CEP250 and NINL, resulting in their displacement from the centrosomes. Regulates kinetochore microtubule attachment stability in mitosis via phosphorylation of NDC80. Involved in regulation of mitotic checkpoint protein complex via phosphorylation of CDC20 and MAD2L1. Plays an active role in chromatin condensation during the first meiotic division through phosphorylation of HMGA2. Phosphorylates: PPP1CC; SGO1; NECAB3 and NPM1. Essential for localization of MAD2L1 to kinetochore and MAPK1 and NPM1 to the centrosome. Phosphorylates CEP68 and CNTLN directly or indirectly. NEK2-mediated phosphorylation of CEP68 promotes CEP68 dissociation from the centrosome and its degradation at the onset of mitosis. Phosphorylates and activates NEK11 in G1/S-arrested cells. Involved in the regulation of centrosome disjunction. The polypeptide is Serine/threonine-protein kinase Nek2 (Nek2) (Mus musculus (Mouse)).